We begin with the raw amino-acid sequence, 265 residues long: MKPTILLYDSGMGGLTIYDAIRQTLPNAHYLYCFDNAYFPYSERSENVLIEQAVKIVQKIAEKYPLDMVVVACNTASTVVLPALREKFAFPIVGTVPAIKPAAAISQTKTIGLLATKGTVERPYVAELIEKYAKDCIVEKIGTTTLVELVEEKIRTGQVDQERLIEVIAEWQTHPTLDTVILGCTHFPLVKQELQQLLPNVKYFIDPGNGIANRVSALLSESVPEEPEQNKENIAFCTKIDEEFFKREVIMQQWGFKRLELLNFL.

Substrate is bound by residues 9–10 (DS) and 41–42 (YS). The active-site Proton donor/acceptor is cysteine 73. 74–75 (NT) contributes to the substrate binding site. Cysteine 184 serves as the catalytic Proton donor/acceptor. A substrate-binding site is contributed by 185–186 (TH).

It belongs to the aspartate/glutamate racemases family.

The catalysed reaction is L-glutamate = D-glutamate. The protein operates within cell wall biogenesis; peptidoglycan biosynthesis. In terms of biological role, provides the (R)-glutamate required for cell wall biosynthesis. This Actinobacillus pleuropneumoniae serotype 3 (strain JL03) protein is Glutamate racemase.